The primary structure comprises 208 residues: Guanylate kinase (208 aa).

The Guanylate kinase-like domain occupies 4 to 185 (GNLYILSAPS…ALADLVHILR (182 aa)). 11–18 (APSGAGKS) contributes to the ATP binding site.

It belongs to the guanylate kinase family.

It is found in the cytoplasm. The enzyme catalyses GMP + ATP = GDP + ADP. Its function is as follows. Essential for recycling GMP and indirectly, cGMP. The polypeptide is Guanylate kinase (Mannheimia succiniciproducens (strain KCTC 0769BP / MBEL55E)).